A 93-amino-acid chain; its full sequence is Neutrophil cationic peptide 1 type B (93 aa).

The signal sequence occupies residues 1 to 19 (MRTVPLFAACLLLTLMAQA). A propeptide spanning residues 20 to 62 (EPLPRAADHSDTKMKGDREDHVAVISFWEEESTSLQDAGAGAG) is cleaved from the precursor. Intrachain disulfides connect C65–C93, C67–C82, and C72–C92.

This sequence belongs to the alpha-defensin family. Bone marrow.

The protein resides in the secreted. Functionally, has antibiotic, anti-fungi and antiviral activity. In Cavia porcellus (Guinea pig), this protein is Neutrophil cationic peptide 1 type B.